A 204-amino-acid polypeptide reads, in one-letter code: Proteasome subunit beta 2 (204 aa).

The propeptide at 1–6 is removed in mature form; by autocatalysis; sequence MEVLPG. The Nucleophile role is filled by T7.

This sequence belongs to the peptidase T1B family. The 20S proteasome core is composed of 14 alpha and 14 beta subunits that assemble into four stacked heptameric rings, resulting in a barrel-shaped structure. The two inner rings, each composed of seven catalytic beta subunits, are sandwiched by two outer rings, each composed of seven alpha subunits. The catalytic chamber with the active sites is on the inside of the barrel. Has a gated structure, the ends of the cylinder being occluded by the N-termini of the alpha-subunits. Is capped at one or both ends by the proteasome regulatory ATPase, PAN.

Its subcellular location is the cytoplasm. The enzyme catalyses Cleavage of peptide bonds with very broad specificity.. Its activity is regulated as follows. The formation of the proteasomal ATPase PAN-20S proteasome complex, via the docking of the C-termini of PAN into the intersubunit pockets in the alpha-rings, triggers opening of the gate for substrate entry. Interconversion between the open-gate and close-gate conformations leads to a dynamic regulation of the 20S proteasome proteolysis activity. In terms of biological role, component of the proteasome core, a large protease complex with broad specificity involved in protein degradation. The polypeptide is Proteasome subunit beta 2 (Thermofilum pendens (strain DSM 2475 / Hrk 5)).